The sequence spans 376 residues: Succinyl-diaminopimelate desuccinylase (376 aa).

A Zn(2+)-binding site is contributed by H67. Residue D69 is part of the active site. D100 contributes to the Zn(2+) binding site. Residue E134 is the Proton acceptor of the active site. 3 residues coordinate Zn(2+): E135, E163, and H349.

Belongs to the peptidase M20A family. DapE subfamily. As to quaternary structure, homodimer. Zn(2+) is required as a cofactor. It depends on Co(2+) as a cofactor.

The catalysed reaction is N-succinyl-(2S,6S)-2,6-diaminopimelate + H2O = (2S,6S)-2,6-diaminopimelate + succinate. It functions in the pathway amino-acid biosynthesis; L-lysine biosynthesis via DAP pathway; LL-2,6-diaminopimelate from (S)-tetrahydrodipicolinate (succinylase route): step 3/3. Functionally, catalyzes the hydrolysis of N-succinyl-L,L-diaminopimelic acid (SDAP), forming succinate and LL-2,6-diaminopimelate (DAP), an intermediate involved in the bacterial biosynthesis of lysine and meso-diaminopimelic acid, an essential component of bacterial cell walls. This is Succinyl-diaminopimelate desuccinylase from Xanthomonas campestris pv. campestris (strain B100).